A 256-amino-acid polypeptide reads, in one-letter code: Hypodermin-B (256 aa).

The N-terminal stretch at 1–22 is a signal peptide; that stretch reads MLKFVILVCSVACVFGAVVPGG. Positions 23–30 are cleaved as a propeptide — activation peptide; sequence MLPQLDGR. The Peptidase S1 domain occupies 31 to 254; it reads IVGGFEADIE…VRSWITENAK (224 aa). Cys-56 and Cys-72 are joined by a disulfide. Active-site charge relay system residues include His-71 and Asp-116. Disulfide bonds link Cys-180–Cys-197 and Cys-206–Cys-230. The active-site Charge relay system is Ser-210.

The protein belongs to the peptidase S1 family.

The protein resides in the secreted. In terms of biological role, protease that shows preferential cleavage after Arg and Lys residues. This chain is Hypodermin-B, found in Hypoderma lineatum (Early cattle grub).